A 94-amino-acid polypeptide reads, in one-letter code: Probable Fe(2+)-trafficking protein (94 aa).

This sequence belongs to the Fe(2+)-trafficking protein family.

Its function is as follows. Could be a mediator in iron transactions between iron acquisition and iron-requiring processes, such as synthesis and/or repair of Fe-S clusters in biosynthetic enzymes. This chain is Probable Fe(2+)-trafficking protein, found in Haemophilus ducreyi (strain 35000HP / ATCC 700724).